The following is a 478-amino-acid chain: UDP-N-acetylmuramate--L-alanine ligase (478 aa).

Position 120 to 126 (120 to 126 (GSHGKTT)) interacts with ATP.

Belongs to the MurCDEF family.

Its subcellular location is the cytoplasm. The catalysed reaction is UDP-N-acetyl-alpha-D-muramate + L-alanine + ATP = UDP-N-acetyl-alpha-D-muramoyl-L-alanine + ADP + phosphate + H(+). Its pathway is cell wall biogenesis; peptidoglycan biosynthesis. Its function is as follows. Cell wall formation. In Rickettsia bellii (strain OSU 85-389), this protein is UDP-N-acetylmuramate--L-alanine ligase.